The following is a 919-amino-acid chain: GPI ethanolamine phosphate transferase 1 (919 aa).

Residues 1–8 lie on the Cytoplasmic side of the membrane; that stretch reads MWSRHRLY. A helical transmembrane segment spans residues 9–29; the sequence is FIVAGVLFHLFYLWSIFDIYF. The Lumenal segment spans residues 30–456; it reads VSPLVHGMKQ…TTYNWRFIRT (427 aa). N-linked (GlcNAc...) asparagine glycosylation is found at Asn-138, Asn-196, Asn-201, Asn-285, and Asn-311. A helical transmembrane segment spans residues 457–477; sequence IVTLGFLGWIVYSFSIFLRLF. Topologically, residues 478–487 are cytoplasmic; sequence ILNRDYNSHK. Residues 488–508 form a helical membrane-spanning segment; the sequence is SLLNYFIFGSLTIILNYVLYY. Topologically, residues 509-510 are lumenal; sequence QK. Residues 511–531 form a helical membrane-spanning segment; it reads APFNYYMYLFFPLIFWSEIFT. At 532–558 the chain is on the cytoplasmic side; it reads DRVVLDDGVKEFLKGISIPKRIILVSA. The chain crosses the membrane as a helical span at residues 559-579; the sequence is IILVYESIVYAFFDRWIFSLI. Residues 580-598 are Lumenal-facing; that stretch reads FNMLSFYPLICGYRDWKRN. Residues 599-619 form a helical membrane-spanning segment; the sequence is TLWFITGAAISVFTLLDAVKI. Position 620 (Glu-620) is a topological domain, cytoplasmic. A helical transmembrane segment spans residues 621 to 641; sequence SLTQINIASGLIVLTALSGFL. Over 642–653 the chain is Lumenal; the sequence is HLRKQLNSYTTT. A helical membrane pass occupies residues 654–674; that stretch reads VFICQILLVILMVLATNKSIV. Topologically, residues 675 to 686 are cytoplasmic; the sequence is SLQNRTGLPRDA. A helical transmembrane segment spans residues 687-707; that stretch reads QVAGWVILVVSLLLMPLIHYM. Over 708–718 the chain is Lumenal; that stretch reads KPNNNYKVRML. Residues 719–739 form a helical membrane-spanning segment; that stretch reads IIFLTFAPTFIILTISFESFF. The Cytoplasmic portion of the chain corresponds to 740-773; that stretch reads YLVFSAYIVQWIEIESKLKEQTPNTSHYKQLIRV. The helical transmembrane segment at 774-794 threads the bilayer; it reads TIIGFFLLQNAFFGTGNVASI. At 795 to 815 the chain is on the lumenal side; the sequence is SSFSLDSVYRLMPIFDPFPMG. The chain crosses the membrane as a helical span at residues 816-836; sequence ALLVIKLIIPYIILSAGLGIL. Residues 837-845 lie on the Cytoplasmic side of the membrane; sequence NLKLHIKDY. Residues 846–866 form a helical membrane-spanning segment; it reads TISTLIISTSDILSLNFFYLL. The Lumenal segment spans residues 867 to 882; the sequence is KTEGSWLDIGITISNY. The helical transmembrane segment at 883–903 threads the bilayer; the sequence is CLAILSSLFMLILEIVAHVVL. The Cytoplasmic portion of the chain corresponds to 904 to 919; it reads KNVQLSKPVIASKKTN.

The protein belongs to the PIGG/PIGN/PIGO family. PIGN subfamily.

The protein resides in the endoplasmic reticulum membrane. It participates in glycolipid biosynthesis; glycosylphosphatidylinositol-anchor biosynthesis. In terms of biological role, ethanolamine phosphate transferase involved in glycosylphosphatidylinositol-anchor biosynthesis. Transfers ethanolamine phosphate to the first alpha-1,4-linked mannose of the glycosylphosphatidylinositol precursor of GPI-anchor. The chain is GPI ethanolamine phosphate transferase 1 (MCD4) from Kluyveromyces lactis (strain ATCC 8585 / CBS 2359 / DSM 70799 / NBRC 1267 / NRRL Y-1140 / WM37) (Yeast).